The primary structure comprises 409 residues: Dual-specificity RNA methyltransferase RlmN (409 aa).

The Proton acceptor role is filled by Glu121. The Radical SAM core domain maps to 127–376 (EEGRGTLCIS…IRTPRGRDIL (250 aa)). A disulfide bridge connects residues Cys134 and Cys379. The [4Fe-4S] cluster site is built by Cys141, Cys145, and Cys148. S-adenosyl-L-methionine contacts are provided by residues 205 to 206 (GE), Ser237, 259 to 261 (SLH), and Asn336. Catalysis depends on Cys379, which acts as the S-methylcysteine intermediate.

It belongs to the radical SAM superfamily. RlmN family. [4Fe-4S] cluster serves as cofactor.

Its subcellular location is the cytoplasm. It carries out the reaction adenosine(2503) in 23S rRNA + 2 reduced [2Fe-2S]-[ferredoxin] + 2 S-adenosyl-L-methionine = 2-methyladenosine(2503) in 23S rRNA + 5'-deoxyadenosine + L-methionine + 2 oxidized [2Fe-2S]-[ferredoxin] + S-adenosyl-L-homocysteine. The catalysed reaction is adenosine(37) in tRNA + 2 reduced [2Fe-2S]-[ferredoxin] + 2 S-adenosyl-L-methionine = 2-methyladenosine(37) in tRNA + 5'-deoxyadenosine + L-methionine + 2 oxidized [2Fe-2S]-[ferredoxin] + S-adenosyl-L-homocysteine. Specifically methylates position 2 of adenine 2503 in 23S rRNA and position 2 of adenine 37 in tRNAs. m2A2503 modification seems to play a crucial role in the proofreading step occurring at the peptidyl transferase center and thus would serve to optimize ribosomal fidelity. This Agrobacterium fabrum (strain C58 / ATCC 33970) (Agrobacterium tumefaciens (strain C58)) protein is Dual-specificity RNA methyltransferase RlmN.